A 1909-amino-acid chain; its full sequence is NFX1-type zinc finger-containing protein 1 (1909 aa).

Basic and acidic residues-rich tracts occupy residues 1 to 12 and 76 to 107; these read MEDRRPHLEARP and RNQEGHTSDEARDQRQSQNDTRRRNDDQEGRS. 2 disordered regions span residues 1–133 and 787–813; these read MEDR…QPQQ and TQSASPAGPENTAQAEGEEEEEGEEEG. Residues 113–122 are compositionally biased toward polar residues; sequence SSDTFQQWHT. Over residues 802 to 813 the composition is skewed to acidic residues; it reads EGEEEEEGEEEG. The stretch at 939-964 forms a coiled coil; that stretch reads RRRILSYERQYRTWAERMAELRLQED. NF-X1-type zinc fingers lie at residues 1291–1313, 1375–1393, 1433–1455, and 1463–1480; these read CGHVCTRACHPYDSSHKEFQCMK, CGHRCSHLCGEDCVRLCSE, CGHPCPGSCHSCFEGRFHERCQQ, and CSHKCQEPCTGECPPCQR. A coiled-coil region spans residues 1733 to 1764; that stretch reads LAKKRLSFSSQELSDLQSEIQRLTYLVNLLMR. Residues 1818-1889 form an RZ-type zinc finger; it reads ISDEERVQIV…LASEMDGAQH (72 aa). Zn(2+) contacts are provided by Cys-1840, His-1844, Cys-1860, and Cys-1863.

Belongs to the ZNFX1 family. As to quaternary structure, interacts with MAVS.

Its subcellular location is the mitochondrion outer membrane. It is found in the cytoplasm. It localises to the stress granule. Its function is as follows. RNA-binding protein that initiates the antiviral response and is required to restrict the replication of RNA viruses. Acts as a double-stranded RNA (dsRNA) sensor that recognizes viral RNA and then interacts with MAVS to initiate the type I interferon response. Also required for immunity against some bacteria, such as mycobacteria. The polypeptide is NFX1-type zinc finger-containing protein 1 (Mus musculus (Mouse)).